The chain runs to 311 residues: MKPKIFIDGEHGTTGLQIRTRLAERDDLEVISIPEAERRNKDLRADYLRAADIAILCLPDDASKEAVSLLEGHNSTRIIDTSTAHRVHPDWAYGFAELAKGQRERIAEARLVANPGCYPTGAIALVRPLRDAGLLPADYPVSVNAVSGYTGGGKQMIAQMEDKSHPEHLAANNFLYGLPLKHKHVPELQLHGRLDRRPIFSPSVGRFPQGMIVQVPLFLTGLEGTPSLAKVHSVLTDHYAGQDIVEVAPLEESAKLARVDAEELAGKDGMKLFVFGTEGDGEVNLVALLDNLGKGASGAAVQNMNLMLGKV.

The active site involves Cys117.

Belongs to the NAGSA dehydrogenase family. Type 2 subfamily.

Its subcellular location is the cytoplasm. The catalysed reaction is N-acetyl-L-glutamate 5-semialdehyde + phosphate + NADP(+) = N-acetyl-L-glutamyl 5-phosphate + NADPH + H(+). The protein operates within amino-acid biosynthesis; L-arginine biosynthesis; N(2)-acetyl-L-ornithine from L-glutamate: step 3/4. Its function is as follows. Catalyzes the NADPH-dependent reduction of N-acetyl-5-glutamyl phosphate to yield N-acetyl-L-glutamate 5-semialdehyde. In Brucella anthropi (strain ATCC 49188 / DSM 6882 / CCUG 24695 / JCM 21032 / LMG 3331 / NBRC 15819 / NCTC 12168 / Alc 37) (Ochrobactrum anthropi), this protein is N-acetyl-gamma-glutamyl-phosphate reductase.